The following is a 213-amino-acid chain: Imidazole glycerol phosphate synthase subunit HisH (213 aa).

Residues 8-213 (TVALIDYGAG…FLSRFLDWNP (206 aa)) form the Glutamine amidotransferase type-1 domain. Cys91 (nucleophile) is an active-site residue. Catalysis depends on residues His193 and Glu195.

As to quaternary structure, heterodimer of HisH and HisF.

It localises to the cytoplasm. It carries out the reaction 5-[(5-phospho-1-deoxy-D-ribulos-1-ylimino)methylamino]-1-(5-phospho-beta-D-ribosyl)imidazole-4-carboxamide + L-glutamine = D-erythro-1-(imidazol-4-yl)glycerol 3-phosphate + 5-amino-1-(5-phospho-beta-D-ribosyl)imidazole-4-carboxamide + L-glutamate + H(+). It catalyses the reaction L-glutamine + H2O = L-glutamate + NH4(+). Its pathway is amino-acid biosynthesis; L-histidine biosynthesis; L-histidine from 5-phospho-alpha-D-ribose 1-diphosphate: step 5/9. IGPS catalyzes the conversion of PRFAR and glutamine to IGP, AICAR and glutamate. The HisH subunit catalyzes the hydrolysis of glutamine to glutamate and ammonia as part of the synthesis of IGP and AICAR. The resulting ammonia molecule is channeled to the active site of HisF. The sequence is that of Imidazole glycerol phosphate synthase subunit HisH from Zymomonas mobilis subsp. mobilis (strain ATCC 31821 / ZM4 / CP4).